A 196-amino-acid polypeptide reads, in one-letter code: Large ribosomal subunit protein uL6 (196 aa).

It belongs to the universal ribosomal protein uL6 family. Part of the 50S ribosomal subunit.

Its function is as follows. This protein binds to the 23S rRNA, and is important in its secondary structure. It is located near the subunit interface in the base of the L7/L12 stalk, and near the tRNA binding site of the peptidyltransferase center. This Archaeoglobus fulgidus (strain ATCC 49558 / DSM 4304 / JCM 9628 / NBRC 100126 / VC-16) protein is Large ribosomal subunit protein uL6.